The sequence spans 208 residues: N-(5'-phosphoribosyl)anthranilate isomerase (208 aa).

Belongs to the TrpF family.

The enzyme catalyses N-(5-phospho-beta-D-ribosyl)anthranilate = 1-(2-carboxyphenylamino)-1-deoxy-D-ribulose 5-phosphate. Its pathway is amino-acid biosynthesis; L-tryptophan biosynthesis; L-tryptophan from chorismate: step 3/5. The protein is N-(5'-phosphoribosyl)anthranilate isomerase of Deinococcus radiodurans (strain ATCC 13939 / DSM 20539 / JCM 16871 / CCUG 27074 / LMG 4051 / NBRC 15346 / NCIMB 9279 / VKM B-1422 / R1).